The primary structure comprises 206 residues: LexA repressor (206 aa).

A DNA-binding region (H-T-H motif) is located at residues 28-48 (RAEIATRLGFKSANAAEEHLK). Residues serine 123 and lysine 160 each act as for autocatalytic cleavage activity in the active site.

Belongs to the peptidase S24 family. Homodimer.

It catalyses the reaction Hydrolysis of Ala-|-Gly bond in repressor LexA.. Functionally, represses a number of genes involved in the response to DNA damage (SOS response), including recA and lexA. In the presence of single-stranded DNA, RecA interacts with LexA causing an autocatalytic cleavage which disrupts the DNA-binding part of LexA, leading to derepression of the SOS regulon and eventually DNA repair. The sequence is that of LexA repressor from Shewanella oneidensis (strain ATCC 700550 / JCM 31522 / CIP 106686 / LMG 19005 / NCIMB 14063 / MR-1).